A 660-amino-acid chain; its full sequence is MEVSGPEDDPFLSQLHQVQCPVCQQMMPAAHINSHLDRCLLLHPAGHAEPAAGPHRAGERAKGPSPPGAKRRRLSESSALKQPATPTAAESSEGEGEEGDDGGETESRESYDAPPTPSGARLIPDFPVARSSSPARKGLGKRPAAAAAAGSASPRSWDETEAQEEEEAGVDGDGDADVDGEDDPGHWDADAADASFGVSAGRAHPRALPAEEIRQMLEGKPLADKMRPDTLQDYIGQSRAVGQETLLRSLLETNEIPSLILWGPPGCGKTTLAHIIANNSKKHSIRFVTLSATNAKTNDVRDVIKQAQNEKSFFKRKTILFIDEIHRFNKSQQDTFLPHVECGTITLIGATTENPSFQVNTALLSRCRVIVLEKLPVEAMVTILMRAINSLGIHVLDSSRPTDPLSHSSNCSSEPSVFIEDKAVDTLAYLSDGDARTGLNGLQLAVLARLSSRKMFCKKSGQTYSPSRVLITENDVKEGLQRSHILYDRAGEEHYNCISALHKAMRGSDQNASLYWLARMLEGGEDPLYVARRLVRFASEDIGLADPSALAQAVAAYQGCHFIGMPECEVLLAQCVVYFARAPKSIEVYSAYNNVKACLRSHQGPLPPVPLHLRNAPTRLMKDLGYGKGYKYNPMYSEPVDQDYLPEELRGVDFFKQRRC.

Residues 17 to 44 form a UBZ4-type zinc finger; sequence QVQCPVCQQMMPAAHINSHLDRCLLLHP. C20, C23, H31, H35, and C39 together coordinate Zn(2+). The interval 50-191 is disordered; it reads PAAGPHRAGE…DDPGHWDADA (142 aa). Residues S65 and S75 each carry the phosphoserine modification. Residues 76–89 show a composition bias toward polar residues; it reads ESSALKQPATPTAA. K81 participates in a covalent cross-link: Glycyl lysine isopeptide (Lys-Gly) (interchain with G-Cter in ubiquitin). T85 is subject to Phosphothreonine. S91 and S92 each carry phosphoserine. Residues 92–104 show a composition bias toward acidic residues; the sequence is SEGEGEEGDDGGE. T116 is modified (phosphothreonine). Over residues 135–155 the composition is skewed to low complexity; sequence ARKGLGKRPAAAAAAGSASPR. K141 is covalently cross-linked (Glycyl lysine isopeptide (Lys-Gly) (interchain with G-Cter in ubiquitin)). S153 carries the post-translational modification Phosphoserine. Positions 159–182 are enriched in acidic residues; sequence ETEAQEEEEAGVDGDGDADVDGED. Residue K220 forms a Glycyl lysine isopeptide (Lys-Gly) (interchain with G-Cter in ubiquitin) linkage. 265-271 serves as a coordination point for ATP; it reads PGCGKTT. Glycyl lysine isopeptide (Lys-Gly) (interchain with G-Cter in ubiquitin) cross-links involve residues K296, K305, K311, K317, and K330. A Glycyl lysine isopeptide (Lys-Gly) (interchain with G-Cter in SUMO2); alternate cross-link involves residue K477. K477 participates in a covalent cross-link: Glycyl lysine isopeptide (Lys-Gly) (interchain with G-Cter in ubiquitin); alternate. A phosphotyrosine mark is found at Y529 and Y557. K622 participates in a covalent cross-link: Glycyl lysine isopeptide (Lys-Gly) (interchain with G-Cter in ubiquitin). A Glycyl lysine isopeptide (Lys-Gly) (interchain with G-Cter in ubiquitin); alternate cross-link involves residue K628. K628 bears the N6-acetyllysine; alternate mark. K631 participates in a covalent cross-link: Glycyl lysine isopeptide (Lys-Gly) (interchain with G-Cter in ubiquitin).

The protein belongs to the AAA ATPase family. RarA/MGS1/WRNIP1 subfamily. In terms of assembly, forms homooligomers, possibly octamers. Directly interacts with POLD1, POLD2 and POLD4. Interacts with the N-terminal domain of WRN. Interacts (via UBZ4-type zinc finger) with monoubiquitin and polyubiquitin. Interacts with TRIM14 and PPP6C; these interactions positively regulate the RIGI signaling pathway. Post-translationally, sumoylated with SUMO1 and SUMO2/3. As to expression, ubiquitously expressed.

The protein resides in the nucleus. It is found in the cytoplasm. It carries out the reaction ATP + H2O = ADP + phosphate + H(+). Functionally, functions as a modulator of initiation or reinitiation events during DNA polymerase delta-mediated DNA synthesis. In the presence of ATP, stimulation of DNA polymerase delta-mediated DNA synthesis is decreased. Also plays a role in the innate immune defense against viruses. Stabilizes the RIGI dsRNA interaction and promotes RIGI 'Lys-63'-linked polyubiquitination. In turn, RIGI transmits the signal through mitochondrial MAVS. This Rattus norvegicus (Rat) protein is ATPase WRNIP1.